The following is a 741-amino-acid chain: Phosphoribosylformylglycinamidine synthase subunit PurL (741 aa).

His54 is an active-site residue. Residues Tyr57 and Lys96 each coordinate ATP. Residue Glu98 participates in Mg(2+) binding. Substrate is bound by residues 99-102 (SHNH) and Arg121. The active-site Proton acceptor is the His100. Asp122 provides a ligand contact to Mg(2+). Gln245 is a binding site for substrate. Asp273 provides a ligand contact to Mg(2+). Residue 317–319 (ESQ) participates in substrate binding. Residues Asp500 and Gly537 each contribute to the ATP site. Asn538 lines the Mg(2+) pocket. Ser540 is a substrate binding site.

This sequence belongs to the FGAMS family. As to quaternary structure, monomer. Part of the FGAM synthase complex composed of 1 PurL, 1 PurQ and 2 PurS subunits.

It is found in the cytoplasm. It catalyses the reaction N(2)-formyl-N(1)-(5-phospho-beta-D-ribosyl)glycinamide + L-glutamine + ATP + H2O = 2-formamido-N(1)-(5-O-phospho-beta-D-ribosyl)acetamidine + L-glutamate + ADP + phosphate + H(+). The protein operates within purine metabolism; IMP biosynthesis via de novo pathway; 5-amino-1-(5-phospho-D-ribosyl)imidazole from N(2)-formyl-N(1)-(5-phospho-D-ribosyl)glycinamide: step 1/2. In terms of biological role, part of the phosphoribosylformylglycinamidine synthase complex involved in the purines biosynthetic pathway. Catalyzes the ATP-dependent conversion of formylglycinamide ribonucleotide (FGAR) and glutamine to yield formylglycinamidine ribonucleotide (FGAM) and glutamate. The FGAM synthase complex is composed of three subunits. PurQ produces an ammonia molecule by converting glutamine to glutamate. PurL transfers the ammonia molecule to FGAR to form FGAM in an ATP-dependent manner. PurS interacts with PurQ and PurL and is thought to assist in the transfer of the ammonia molecule from PurQ to PurL. The sequence is that of Phosphoribosylformylglycinamidine synthase subunit PurL from Shouchella clausii (strain KSM-K16) (Alkalihalobacillus clausii).